A 570-amino-acid polypeptide reads, in one-letter code: Enhancer of polycomb-like protein 1 (570 aa).

The interval 541-570 is disordered; it reads ALNNLNSGQTSGQTMGSNPGPGAIAPTPET. Polar residues predominate over residues 543-557; it reads NNLNSGQTSGQTMGS.

It belongs to the enhancer of polycomb family. In terms of assembly, component of the NuA4 histone acetyltransferase complex.

The protein localises to the nucleus. Component of the NuA4 histone acetyltransferase complex which is involved in transcriptional activation of selected genes principally by acetylation of nucleosomal histone H4 and H2A. The NuA4 complex is also involved in DNA repair. Involved in gene silencing by neighboring heterochromatin, blockage of the silencing spreading along the chromosome, and required for cell cycle progression through G2/M. This is Enhancer of polycomb-like protein 1 (epl1) from Emericella nidulans (strain FGSC A4 / ATCC 38163 / CBS 112.46 / NRRL 194 / M139) (Aspergillus nidulans).